Reading from the N-terminus, the 59-residue chain is Large ribosomal subunit protein uL30 (59 aa).

The protein belongs to the universal ribosomal protein uL30 family. In terms of assembly, part of the 50S ribosomal subunit.

This chain is Large ribosomal subunit protein uL30, found in Aliivibrio salmonicida (strain LFI1238) (Vibrio salmonicida (strain LFI1238)).